Here is a 527-residue protein sequence, read N- to C-terminus: GMP synthase [glutamine-hydrolyzing] (527 aa).

The Glutamine amidotransferase type-1 domain maps to 4 to 202 (KILILDFGSQ…VLKICGAKPD (199 aa)). Residue Cys-81 is the Nucleophile of the active site. Catalysis depends on residues His-176 and Glu-178. Residues 203 to 395 (WEMGNYIDEA…LGLPPSMVYR (193 aa)) enclose the GMPS ATP-PPase domain. 230–236 (SGGVDSS) serves as a coordination point for ATP.

Homodimer.

It carries out the reaction XMP + L-glutamine + ATP + H2O = GMP + L-glutamate + AMP + diphosphate + 2 H(+). It functions in the pathway purine metabolism; GMP biosynthesis; GMP from XMP (L-Gln route): step 1/1. Its function is as follows. Catalyzes the synthesis of GMP from XMP. In Paraburkholderia phymatum (strain DSM 17167 / CIP 108236 / LMG 21445 / STM815) (Burkholderia phymatum), this protein is GMP synthase [glutamine-hydrolyzing].